Here is a 290-residue protein sequence, read N- to C-terminus: Cilia- and flagella-associated protein 298 (290 aa).

This sequence belongs to the CFAP298 family. In terms of assembly, interacts with dnaaf1/swt. Interacts with lrrc6/sea. Interacts with dvl (via DEP and PDZ domains). As to expression, strongly expressed in ciliated tissues of the embryonic trunk, including the pronephric ducts and spinal canal.

The protein resides in the cytoplasm. Its subcellular location is the cytoskeleton. It localises to the cilium basal body. Plays a role in motile cilium function, possibly by acting on outer dynein arm assembly. Seems to be important for initiation rather than maintenance of cilium motility. Required for correct positioning of cilia at the apical cell surface, suggesting an additional role in the planar cell polarity (PCP) pathway. May suppress canonical Wnt signaling activity. This chain is Cilia- and flagella-associated protein 298, found in Danio rerio (Zebrafish).